The sequence spans 721 residues: Ribonucleoside-diphosphate reductase subunit alpha (721 aa).

Substrate is bound by residues Thr-159, Ser-175–Cys-176, Gly-204, Asn-384–Glu-388, and Pro-589–Ile-593. A disulfide bridge links Cys-176 with Cys-413. The active-site Proton acceptor is the Asn-384. The Cysteine radical intermediate role is filled by Cys-386. Residue Glu-388 is the Proton acceptor of the active site.

Belongs to the ribonucleoside diphosphate reductase large chain family. In terms of assembly, tetramer of two alpha and two beta subunits.

The catalysed reaction is a 2'-deoxyribonucleoside 5'-diphosphate + [thioredoxin]-disulfide + H2O = a ribonucleoside 5'-diphosphate + [thioredoxin]-dithiol. Its activity is regulated as follows. Under complex allosteric control mediated by deoxynucleoside triphosphates and ATP binding. The type of nucleotide bound at the specificity site determines substrate preference. It seems probable that ATP makes the enzyme reduce CDP and UDP, dGTP favors ADP reduction and dTTP favors GDP reduction. Its function is as follows. Provides the precursors necessary for DNA synthesis. Catalyzes the biosynthesis of deoxyribonucleotides from the corresponding ribonucleotides. The sequence is that of Ribonucleoside-diphosphate reductase subunit alpha (nrdE) from Mycoplasma genitalium (strain ATCC 33530 / DSM 19775 / NCTC 10195 / G37) (Mycoplasmoides genitalium).